Here is a 433-residue protein sequence, read N- to C-terminus: Enolase (433 aa).

Residue Q167 participates in (2R)-2-phosphoglycerate binding. The active-site Proton donor is the E209. Residues D246, E291, and D318 each coordinate Mg(2+). K343, R372, S373, and K394 together coordinate (2R)-2-phosphoglycerate. K343 serves as the catalytic Proton acceptor.

The protein belongs to the enolase family. Component of the RNA degradosome, a multiprotein complex involved in RNA processing and mRNA degradation. Mg(2+) is required as a cofactor.

It is found in the cytoplasm. It localises to the secreted. The protein localises to the cell surface. It carries out the reaction (2R)-2-phosphoglycerate = phosphoenolpyruvate + H2O. Its pathway is carbohydrate degradation; glycolysis; pyruvate from D-glyceraldehyde 3-phosphate: step 4/5. Its function is as follows. Catalyzes the reversible conversion of 2-phosphoglycerate (2-PG) into phosphoenolpyruvate (PEP). It is essential for the degradation of carbohydrates via glycolysis. The sequence is that of Enolase from Aeromonas salmonicida (strain A449).